The sequence spans 193 residues: Large ribosomal subunit protein uL5 (193 aa).

The protein belongs to the universal ribosomal protein uL5 family. Part of the 50S ribosomal subunit; part of the 5S rRNA/L5/L18/L25 subcomplex. Contacts the 5S rRNA and the P site tRNA. Forms a bridge to the 30S subunit in the 70S ribosome.

Its function is as follows. This is one of the proteins that bind and probably mediate the attachment of the 5S RNA into the large ribosomal subunit, where it forms part of the central protuberance. In the 70S ribosome it contacts protein S13 of the 30S subunit (bridge B1b), connecting the 2 subunits; this bridge is implicated in subunit movement. Contacts the P site tRNA; the 5S rRNA and some of its associated proteins might help stabilize positioning of ribosome-bound tRNAs. This Renibacterium salmoninarum (strain ATCC 33209 / DSM 20767 / JCM 11484 / NBRC 15589 / NCIMB 2235) protein is Large ribosomal subunit protein uL5.